We begin with the raw amino-acid sequence, 319 residues long: tRNA-cytidine(32) 2-sulfurtransferase (319 aa).

Residues 43-48 (SGGKDS) carry the PP-loop motif motif. Positions 118, 121, and 209 each coordinate [4Fe-4S] cluster.

Belongs to the TtcA family. Homodimer. It depends on Mg(2+) as a cofactor. [4Fe-4S] cluster is required as a cofactor.

The protein localises to the cytoplasm. The catalysed reaction is cytidine(32) in tRNA + S-sulfanyl-L-cysteinyl-[cysteine desulfurase] + AH2 + ATP = 2-thiocytidine(32) in tRNA + L-cysteinyl-[cysteine desulfurase] + A + AMP + diphosphate + H(+). It functions in the pathway tRNA modification. Catalyzes the ATP-dependent 2-thiolation of cytidine in position 32 of tRNA, to form 2-thiocytidine (s(2)C32). The sulfur atoms are provided by the cysteine/cysteine desulfurase (IscS) system. This is tRNA-cytidine(32) 2-sulfurtransferase from Neisseria meningitidis serogroup C (strain 053442).